The chain runs to 619 residues: MAVSKKSRKSEPSAAFTAADGLVLDQSEIMRAMLAAQKGKQKEESEGNDESDEEDDDVSNEGEDEGESSGSEAESSVAAQRNLKRRRSLSFELDAEGEEDKENEESEPRPQPSSGAGMLSRTALATKDMTPKPRSKPQPNGLPSASKPSADVTFESLGLSRPLITALASINIKKPTEIQAACVEPILSGRDCIGGAKTGSGKTMAFALPIVERIARDPFGVWAVVLTPTRELAYQLSEQFLVIGKPLGLTTATIVGGMDMMKQAQELEARPHIIVATPGRLCDLLRSGGVGPGKLSRVRTLVLDEADRMLTPSFAPELAYLFSQIPAKRQTCLFTATVSEAIMELANKEPPAGKQRPFVYRVASDTLTVSNLKQKYLFIPSQIRDPYLLYILQNPLEDIDVALRVDPKKAKAREREAALGKKGKKPKQAKEEEDAPSVPSTVIFTQRCATAHLLHLLLNSLDIPSVPLHSHLTQPQRLLSLARFRAHEVPVLVTTDVGSRGLDIPEVAMVINWDCPRRSDDYVHRVGRTARAGRGGVAVTIITERDTELVKIIEDEVNVRLEELKLDEDKVLEGLNKVSLARRMATMEMHDSGFGERQATNKAKQIKRMKRDAAAAGKA.

The interval 1-149 (MAVSKKSRKS…NGLPSASKPS (149 aa)) is disordered. Residues 46–67 (EGNDESDEEDDDVSNEGEDEGE) are compositionally biased toward acidic residues. The segment covering 68–78 (SSGSEAESSVA) has biased composition (low complexity). The segment covering 93–105 (LDAEGEEDKENEE) has biased composition (acidic residues). Over residues 137 to 147 (PQPNGLPSASK) the composition is skewed to polar residues. A Q motif motif is present at residues 152 to 180 (VTFESLGLSRPLITALASINIKKPTEIQA). The Helicase ATP-binding domain maps to 183–356 (VEPILSGRDC…NKEPPAGKQR (174 aa)). ATP is bound at residue 196–203 (AKTGSGKT). The short motif at 304-307 (DEAD) is the DEAD box element. Residues 414-436 (EREAALGKKGKKPKQAKEEEDAP) form a disordered region. One can recognise a Helicase C-terminal domain in the interval 430 to 572 (KEEEDAPSVP…ELKLDEDKVL (143 aa)).

Belongs to the DEAD box helicase family. DDX49/DBP8 subfamily.

The protein localises to the nucleus. Its subcellular location is the nucleolus. The catalysed reaction is ATP + H2O = ADP + phosphate + H(+). ATP-binding RNA helicase involved in 40S ribosomal subunit biogenesis and is required for the normal formation of 18S rRNAs through pre-rRNA processing at A0, A1 and A2 sites. Required for vegetative growth. This chain is ATP-dependent RNA helicase DBP8 (DBP8), found in Cryptococcus neoformans var. neoformans serotype D (strain B-3501A) (Filobasidiella neoformans).